We begin with the raw amino-acid sequence, 251 residues long: UPF0246 protein PEPE_1842 (251 aa).

This sequence belongs to the UPF0246 family.

This is UPF0246 protein PEPE_1842 from Pediococcus pentosaceus (strain ATCC 25745 / CCUG 21536 / LMG 10740 / 183-1w).